We begin with the raw amino-acid sequence, 509 residues long: Histidine ammonia-lyase (509 aa).

The 5-imidazolinone (Ala-Gly) cross-link spans 142–144 (ASG). At S143 the chain carries 2,3-didehydroalanine (Ser).

This sequence belongs to the PAL/histidase family. In terms of processing, contains an active site 4-methylidene-imidazol-5-one (MIO), which is formed autocatalytically by cyclization and dehydration of residues Ala-Ser-Gly.

The protein resides in the cytoplasm. The enzyme catalyses L-histidine = trans-urocanate + NH4(+). It functions in the pathway amino-acid degradation; L-histidine degradation into L-glutamate; N-formimidoyl-L-glutamate from L-histidine: step 1/3. This is Histidine ammonia-lyase from Pseudomonas aeruginosa (strain LESB58).